Consider the following 245-residue polypeptide: Sugar fermentation stimulation protein homolog (245 aa).

The protein belongs to the SfsA family.

In Rhodospirillum rubrum (strain ATCC 11170 / ATH 1.1.1 / DSM 467 / LMG 4362 / NCIMB 8255 / S1), this protein is Sugar fermentation stimulation protein homolog.